The sequence spans 256 residues: Acetyl-coenzyme A carboxylase carboxyl transferase subunit alpha (256 aa).

The 236-residue stretch at 1-236 (MTDVARILKE…KEHLKTEINQ (236 aa)) folds into the CoA carboxyltransferase C-terminal domain.

This sequence belongs to the AccA family. In terms of assembly, acetyl-CoA carboxylase is a heterohexamer composed of biotin carboxyl carrier protein (AccB), biotin carboxylase (AccC) and two subunits each of ACCase subunit alpha (AccA) and ACCase subunit beta (AccD).

It is found in the cytoplasm. It catalyses the reaction N(6)-carboxybiotinyl-L-lysyl-[protein] + acetyl-CoA = N(6)-biotinyl-L-lysyl-[protein] + malonyl-CoA. It functions in the pathway lipid metabolism; malonyl-CoA biosynthesis; malonyl-CoA from acetyl-CoA: step 1/1. In terms of biological role, component of the acetyl coenzyme A carboxylase (ACC) complex. First, biotin carboxylase catalyzes the carboxylation of biotin on its carrier protein (BCCP) and then the CO(2) group is transferred by the carboxyltransferase to acetyl-CoA to form malonyl-CoA. The chain is Acetyl-coenzyme A carboxylase carboxyl transferase subunit alpha from Streptococcus uberis (strain ATCC BAA-854 / 0140J).